Consider the following 286-residue polypeptide: Phosphate import ATP-binding protein PstB (286 aa).

The region spanning 40-281 (VVARDFSIYY…PKDSMTEDYI (242 aa)) is the ABC transporter domain. ATP is bound at residue 72–79 (GPSGCGKS).

It belongs to the ABC transporter superfamily. Phosphate importer (TC 3.A.1.7) family. The complex is composed of two ATP-binding proteins (PstB), two transmembrane proteins (PstC and PstA) and a solute-binding protein (PstS).

The protein localises to the cell inner membrane. The enzyme catalyses phosphate(out) + ATP + H2O = ADP + 2 phosphate(in) + H(+). Functionally, part of the ABC transporter complex PstSACB involved in phosphate import. Responsible for energy coupling to the transport system. The protein is Phosphate import ATP-binding protein PstB of Chlorobaculum tepidum (strain ATCC 49652 / DSM 12025 / NBRC 103806 / TLS) (Chlorobium tepidum).